A 330-amino-acid polypeptide reads, in one-letter code: Clp protease adapter protein ClpF, chloroplastic (330 aa).

A chloroplast-targeting transit peptide spans 1-65; the sequence is MVQSQSLSTL…KSLKQRNLLR (65 aa). The interval 66–138 is NTD, required for CLPS1-binding; it reads VEARWPFQGG…VEEESIRLQE (73 aa). 2 coiled-coil regions span residues 112 to 139 and 175 to 195; these read NLEQ…LQEG and AAKL…VSAK. Residues 153–188 form the UVR domain; the sequence is GISIIRLRADLQNAIDSEDYGLAAKLRDEISKLEAE. A yccV-like region spans residues 203–310; it reads EYAFRLGQKL…TAGDFIPVKQ (108 aa).

Binds to CLPC1 and CLPC2. Interacts with ClpS1; this interaction stimulates their association with ClpC. Associates with the Clp substrate HEMA1 (GluTR). Expressed constitutively in photosynthetic tissues such as leaves, stems and flowers, and, at low levels, in siliques.

It is found in the plastid. The protein resides in the chloroplast. Its function is as follows. Clp protease adapter that facilitates CLPS1 recruitment to ClpC chaperones thus forming a binary adapter for selective substrate recognition and delivery to plastid Clp protease system (CLPC). This is Clp protease adapter protein ClpF, chloroplastic from Arabidopsis thaliana (Mouse-ear cress).